We begin with the raw amino-acid sequence, 695 residues long: Elongation factor G 2 (695 aa).

The tr-type G domain maps to 5 to 280 (SLYRNIGIFA…AVVDYLPSPT (276 aa)). GTP contacts are provided by residues 14–21 (AHVDAGKT), 78–82 (DTPGH), and 132–135 (NKLD).

The protein belongs to the TRAFAC class translation factor GTPase superfamily. Classic translation factor GTPase family. EF-G/EF-2 subfamily.

The protein localises to the cytoplasm. In terms of biological role, catalyzes the GTP-dependent ribosomal translocation step during translation elongation. During this step, the ribosome changes from the pre-translocational (PRE) to the post-translocational (POST) state as the newly formed A-site-bound peptidyl-tRNA and P-site-bound deacylated tRNA move to the P and E sites, respectively. Catalyzes the coordinated movement of the two tRNA molecules, the mRNA and conformational changes in the ribosome. This chain is Elongation factor G 2, found in Vibrio cholerae serotype O1 (strain ATCC 39315 / El Tor Inaba N16961).